Here is a 257-residue protein sequence, read N- to C-terminus: tRNA pseudouridine synthase A (257 aa).

Residue Asp-53 is the Nucleophile of the active site. Tyr-111 serves as a coordination point for substrate.

It belongs to the tRNA pseudouridine synthase TruA family. Homodimer.

The catalysed reaction is uridine(38/39/40) in tRNA = pseudouridine(38/39/40) in tRNA. Formation of pseudouridine at positions 38, 39 and 40 in the anticodon stem and loop of transfer RNAs. This chain is tRNA pseudouridine synthase A, found in Xylella fastidiosa (strain M12).